We begin with the raw amino-acid sequence, 380 residues long: MTPMRKTNPLAKLINHSFIDLPTPSNISTWWNFGSLLGACLILQITTGLFLAMHYSPDASTAFSSIAHITRDVNYGWTIRYLHANGASMFFICLFLHIGRGLYYGSFLHQETWNIGIILLLTTMAAAFMGYVLPWGQMSFWGATVITNLLSAIPYIGTDLVQWVWGGYSVDSPTLTRFFTFHFILPFIITALTTLHLLFLHETGSNNPLGIPSHSDKITFHPYYTIKDILGLFLFLLTLMTLTLFSPDLLGDPDNYTLANPLSTPPHIKPEWYFLFAYAILRSVPNKLGGVLALLLSILILAMIPILHMSKQQSMMFRPLSQLLYWFLIADLFTLTWIGGQPVSYPFITIGQVASVLYFTTILFLMPITSLIENKMLKWT.

4 helical membrane-spanning segments follow: residues 33 to 53 (FGSLLGACLILQITTGLFLAM), 77 to 98 (WTIRYLHANGASMFFICLFLHI), 113 to 133 (WNIGIILLLTTMAAAFMGYVL), and 178 to 198 (FFTFHFILPFIITALTTLHLL). Positions 83 and 97 each coordinate heme b. His-182 and His-196 together coordinate heme b. His-201 serves as a coordination point for a ubiquinone. The next 4 membrane-spanning stretches (helical) occupy residues 226 to 246 (IKDILGLFLFLLTLMTLTLFS), 288 to 308 (LGGVLALLLSILILAMIPILH), 320 to 340 (LSQLLYWFLIADLFTLTWIGG), and 347 to 367 (FITIGQVASVLYFTTILFLMP).

This sequence belongs to the cytochrome b family. As to quaternary structure, the cytochrome bc1 complex contains 11 subunits: 3 respiratory subunits (MT-CYB, CYC1 and UQCRFS1), 2 core proteins (UQCRC1 and UQCRC2) and 6 low-molecular weight proteins (UQCRH/QCR6, UQCRB/QCR7, UQCRQ/QCR8, UQCR10/QCR9, UQCR11/QCR10 and a cleavage product of UQCRFS1). This cytochrome bc1 complex then forms a dimer. Heme b serves as cofactor.

It is found in the mitochondrion inner membrane. In terms of biological role, component of the ubiquinol-cytochrome c reductase complex (complex III or cytochrome b-c1 complex) that is part of the mitochondrial respiratory chain. The b-c1 complex mediates electron transfer from ubiquinol to cytochrome c. Contributes to the generation of a proton gradient across the mitochondrial membrane that is then used for ATP synthesis. The protein is Cytochrome b (MT-CYB) of Gorilla gorilla gorilla (Western lowland gorilla).